A 300-amino-acid polypeptide reads, in one-letter code: uncharacterized protein (300 aa).

The segment at 230 to 251 is disordered; sequence LRQSTSRQSISRQSISRQSTSR. Residues 231 to 251 show a composition bias toward low complexity; the sequence is RQSTSRQSISRQSISRQSTSR.

This is an uncharacterized protein from Acanthamoeba polyphaga (Amoeba).